The primary structure comprises 575 residues: Triokinase/FMN cyclase (575 aa).

The region spanning 9-336 is the DhaK domain; it reads SVAGCADDAL…IDAETTAAAW (328 aa). Residues 56–59, lysine 109, and aspartate 114 each bind dihydroxyacetone; that span reads GSGH. Histidine 221 acts as the Tele-hemiaminal-histidine intermediate in catalysis. Residues 348 to 367 are disordered; it reads KRSRVAPAEPQEAPDSTAAG. Serine 350 carries the post-translational modification Phosphoserine. Residues 372–571 enclose the DhaL domain; sequence KRMALVLERV…AAAILRAILE (200 aa). Residues 401–404, 446–447, glycine 486, and 494–495 each bind ATP; these read DGDC, SS, and TM. 2 positions are modified to phosphoserine: serine 511 and serine 545. 556–558 provides a ligand contact to ATP; sequence DPG.

Belongs to the dihydroxyacetone kinase (DAK) family. In terms of assembly, homodimer. Interacts with IFIH1 (via the CARD domains), the interaction is inhibited by viral infection. The cofactor is Mg(2+). Requires Mn(2+) as cofactor. It depends on Co(2+) as a cofactor. In terms of tissue distribution, detected in erythrocytes (at protein level).

It carries out the reaction dihydroxyacetone + ATP = dihydroxyacetone phosphate + ADP + H(+). The catalysed reaction is D-glyceraldehyde + ATP = D-glyceraldehyde 3-phosphate + ADP + H(+). It catalyses the reaction FAD = riboflavin cyclic-4',5'-phosphate + AMP + H(+). Its activity is regulated as follows. Each activity is inhibited by the substrate(s) of the other. In terms of biological role, catalyzes both the phosphorylation of dihydroxyacetone and of glyceraldehyde, and the splitting of ribonucleoside diphosphate-X compounds among which FAD is the best substrate. Represses IFIH1-mediated cellular antiviral response. The sequence is that of Triokinase/FMN cyclase from Homo sapiens (Human).